Reading from the N-terminus, the 340-residue chain is Protein RecA (340 aa).

Residue 65-72 (GPESGGKT) coordinates ATP.

It belongs to the RecA family.

Its subcellular location is the cytoplasm. Its function is as follows. Can catalyze the hydrolysis of ATP in the presence of single-stranded DNA, the ATP-dependent uptake of single-stranded DNA by duplex DNA, and the ATP-dependent hybridization of homologous single-stranded DNAs. It interacts with LexA causing its activation and leading to its autocatalytic cleavage. The chain is Protein RecA from Thermus thermophilus (strain ATCC 27634 / DSM 579 / HB8).